A 193-amino-acid polypeptide reads, in one-letter code: Cyanate hydratase (193 aa).

Residues Arg121, Glu124, and Ser147 contribute to the active site.

This sequence belongs to the cyanase family.

It carries out the reaction cyanate + hydrogencarbonate + 3 H(+) = NH4(+) + 2 CO2. In terms of biological role, catalyzes the reaction of cyanate with bicarbonate to produce ammonia and carbon dioxide. In Phaeodactylum tricornutum (strain CCAP 1055/1), this protein is Cyanate hydratase.